The primary structure comprises 1575 residues: Laminin subunit gamma-3 (1575 aa).

The signal sequence occupies residues 1-19 (MAAAALLLGLALLAPRAAG). One can recognise a Laminin N-terminal domain in the interval 31–270 (RPQRCLPVFE…AVSDFSVGGR (240 aa)). N-linked (GlcNAc...) asparagine glycans are attached at residues N87 and N119. 16 cysteine pairs are disulfide-bonded: C271–C280, C273–C290, C292–C301, C304–C324, C327–C336, C329–C352, C355–C364, C367–C380, C383–C395, C385–C401, C403–C412, C415–C427, C430–C441, C432–C448, C450–C459, and C462–C477. Laminin EGF-like domains lie at 271–326 (CKCN…ECLP), 327–382 (CNCS…PCQP), 383–429 (CDCQ…GCRP), and 430–479 (CTCN…GCSS). N295 is a glycosylation site (N-linked (GlcNAc...) asparagine). N328 carries an N-linked (GlcNAc...) asparagine glycan. The Laminin EGF-like 5; first part domain maps to 480 to 489 (CFCYGHSKVC). The region spanning 499-672 (HILSDFHQGA…LSPPASWVEI (174 aa)) is the Laminin IV type A domain. An N-linked (GlcNAc...) asparagine glycan is attached at N631. The 34-residue stretch at 673–706 (CSCPTGYTGQFCESCAPGYKREMPQGGPYASCVP) folds into the Laminin EGF-like 5; second part domain. Disulfide bonds link C707–C715, C709–C722, C724–C733, C736–C752, C755–C763, C757–C774, C777–C786, C789–C807, C810–C824, C812–C831, C834–C843, C846–C863, C866–C880, C868–C887, C889–C898, C901–C914, C917–C929, C919–C936, C938–C947, C950–C962, C965–C977, C967–C983, C985–C994, and C997–C1010. Laminin EGF-like domains lie at 707–754 (CTCN…DCQP), 755–809 (CPCP…PCHQ), 810–865 (CQCS…KCMP), 866–916 (CSCH…GCRS), 917–964 (CKCH…GCRA), and 965–1013 (CRCS…CQQC). The N-linked (GlcNAc...) asparagine glycan is linked to N837. N-linked (GlcNAc...) asparagine glycosylation occurs at N980. Residues 1014 to 1575 (PSCYALVKEE…SLPENCASWQ (562 aa)) are domain II and I. Positions 1059–1061 (RGD) match the Cell attachment site motif. The stretch at 1073–1134 (REAFLEQMMS…SEEEILHAAA (62 aa)) forms a coiled coil. The N-linked (GlcNAc...) asparagine glycan is linked to N1185. Positions 1201-1228 (LETQRDLEDRYQEVQAAQKALRTAVAEV) form a coiled coil. Positions 1378 to 1399 (KQAERMLGNAAPLSSSAKKKGR) are disordered. Coiled-coil stretches lie at residues 1410–1492 (KLAK…LARL) and 1523–1567 (GSLQ…LHSL).

Laminin is a complex glycoprotein, consisting of three different polypeptide chains (alpha, beta, gamma), which are bound to each other by disulfide bonds into a cross-shaped molecule comprising one long and three short arms with globules at each end. Gamma-3 is a subunit of laminin-12 (laminin-213), laminin-14 (laminin-423) and laminin-15 (laminin-523). As to expression, broadly expressed in: skin, heart, lung, and the reproductive tracts.

It localises to the secreted. It is found in the extracellular space. Its subcellular location is the extracellular matrix. The protein localises to the basement membrane. Its function is as follows. Binding to cells via a high affinity receptor, laminin is thought to mediate the attachment, migration and organization of cells into tissues during embryonic development by interacting with other extracellular matrix components. This Homo sapiens (Human) protein is Laminin subunit gamma-3 (LAMC3).